The following is a 97-amino-acid chain: Co-chaperonin GroES (97 aa).

It belongs to the GroES chaperonin family. In terms of assembly, heptamer of 7 subunits arranged in a ring. Interacts with the chaperonin GroEL.

The protein resides in the cytoplasm. Together with the chaperonin GroEL, plays an essential role in assisting protein folding. The GroEL-GroES system forms a nano-cage that allows encapsulation of the non-native substrate proteins and provides a physical environment optimized to promote and accelerate protein folding. GroES binds to the apical surface of the GroEL ring, thereby capping the opening of the GroEL channel. The chain is Co-chaperonin GroES from Nocardioides sp. (strain ATCC BAA-499 / JS614).